Reading from the N-terminus, the 598-residue chain is Probable translation initiation factor IF-2 (598 aa).

Residues 3-225 (LRCPIVSVLG…GLAQKFLEQK (223 aa)) enclose the tr-type G domain. The tract at residues 12–19 (GHVDHGKT) is G1. Residue 12 to 19 (GHVDHGKT) participates in GTP binding. The G2 stretch occupies residues 37 to 41 (GITQH). The segment at 76 to 79 (DTPG) is G3. Residues 76–80 (DTPGH) and 130–133 (NKLD) contribute to the GTP site. The interval 130–133 (NKLD) is G4. A G5 region spans residues 200 to 202 (SAI).

The protein belongs to the TRAFAC class translation factor GTPase superfamily. Classic translation factor GTPase family. IF-2 subfamily.

Function in general translation initiation by promoting the binding of the formylmethionine-tRNA to ribosomes. Seems to function along with eIF-2. The chain is Probable translation initiation factor IF-2 from Methanococcus vannielii (strain ATCC 35089 / DSM 1224 / JCM 13029 / OCM 148 / SB).